Here is a 125-residue protein sequence, read N- to C-terminus: Small ribosomal subunit protein uS12 (125 aa).

The tract at residues 9–31 (RQGREVEKIKSKSPAMENSPQRR) is disordered. A 3-methylthioaspartic acid modification is found at aspartate 89. The disordered stretch occupies residues 105–125 (QGVKDRKQSRSKYGAKRPKAK). A compositionally biased stretch (basic residues) spans 113-125 (SRSKYGAKRPKAK).

The protein belongs to the universal ribosomal protein uS12 family. In terms of assembly, part of the 30S ribosomal subunit. Contacts proteins S8 and S17. May interact with IF1 in the 30S initiation complex.

With S4 and S5 plays an important role in translational accuracy. Functionally, interacts with and stabilizes bases of the 16S rRNA that are involved in tRNA selection in the A site and with the mRNA backbone. Located at the interface of the 30S and 50S subunits, it traverses the body of the 30S subunit contacting proteins on the other side and probably holding the rRNA structure together. The combined cluster of proteins S8, S12 and S17 appears to hold together the shoulder and platform of the 30S subunit. This Polaromonas naphthalenivorans (strain CJ2) protein is Small ribosomal subunit protein uS12.